Consider the following 172-residue polypeptide: Centrin-2 (172 aa).

The interval 1–30 is disordered; sequence MASNFKKANMASSSQRKRMSPKPELTEEQK. Residue Ala2 is modified to N-acetylalanine. A required for self-assembly region spans residues 2–25; sequence ASNFKKANMASSSQRKRMSPKPEL. Position 20 is a phosphoserine (Ser20). A Glycyl lysine isopeptide (Lys-Gly) (interchain with G-Cter in SUMO2) cross-link involves residue Lys22. Thr26 is modified (phosphothreonine). EF-hand domains lie at 28 to 63, 64 to 99, 101 to 136, and 137 to 172; these read EQKQEIREAFDLFDADGTGTIDVKELKVAMRALGFE, PKKEEIKKMISEIDKEGTGKMNFGDFLTVMTQKMSE, DTKEEILKAFKLFDDDETGKISFKNLKRVAKELGEN, and LTDEELQEMIDEADRDGDGEVSEQEFLRIMKKTSLY. The Ca(2+) site is built by Asp41, Asp43, Thr45, Thr47, and Glu52. The Ca(2+) site is built by Asp150, Asp152, Asp154, Glu156, and Glu161.

The protein belongs to the centrin family. Monomer. Homooligomer. Interacts with SFI1. Interacts with CCP110. Component of the XPC complex composed of XPC, RAD23B and CETN2. Component of the nuclear pore complex (NPC)-associated TREX-2 complex (transcription and export complex 2), composed of at least GANP, 2 copies of ENY2, PCID2, SEM1/DSS1, and either centrin CETN2 or centrin CETN3. The TREX-2 complex also associates with ALYREF/ALY and with the nucleoporin NUP153. Interacts with USP49. Forms a microtubule-associated complex with POC5, POC1B and FAM161A. Interacts with CCDC15.

The protein resides in the cytoplasm. It localises to the cytoskeleton. It is found in the microtubule organizing center. Its subcellular location is the centrosome. The protein localises to the centriole. The protein resides in the nucleus envelope. It localises to the nucleus. It is found in the nuclear pore complex. Its function is as follows. Plays a fundamental role in microtubule organizing center structure and function. Required for centriole duplication and correct spindle formation. Has a role in regulating cytokinesis and genome stability via cooperation with CALM1 and CCP110. Functionally, involved in global genome nucleotide excision repair (GG-NER) by acting as component of the XPC complex. Cooperatively with RAD23B appears to stabilize XPC. In vitro, stimulates DNA binding of the XPC:RAD23B dimer. The XPC complex is proposed to represent the first factor bound at the sites of DNA damage and together with other core recognition factors, XPA, RPA and the TFIIH complex, is part of the pre-incision (or initial recognition) complex. The XPC complex recognizes a wide spectrum of damaged DNA characterized by distortions of the DNA helix such as single-stranded loops, mismatched bubbles or single-stranded overhangs. The orientation of XPC complex binding appears to be crucial for inducing a productive NER. XPC complex is proposed to recognize and to interact with unpaired bases on the undamaged DNA strand which is followed by recruitment of the TFIIH complex and subsequent scanning for lesions in the opposite strand in a 5'-to-3' direction by the NER machinery. Cyclobutane pyrimidine dimers (CPDs) which are formed upon UV-induced DNA damage esacpe detection by the XPC complex due to a low degree of structural perurbation. Instead they are detected by the UV-DDB complex which in turn recruits and cooperates with the XPC complex in the respective DNA repair. In terms of biological role, as a component of the TREX-2 complex, involved in the export of mRNAs to the cytoplasm through the nuclear pores. This is Centrin-2 (CETN2) from Homo sapiens (Human).